Reading from the N-terminus, the 87-residue chain is Diazepam-binding inhibitor-like 5 (87 aa).

The region spanning Ser-2–Cys-87 is the ACB domain. An acyl-CoA contacts are provided by residues Tyr-29–Lys-33, Lys-55, and Tyr-74.

The protein belongs to the ACBP family. In terms of tissue distribution, exclusively expressed in late spermatids and spermatozoa. Not found in epididymis, spleen, bone marrow, skin, liver, brain, heart, kidney, muscle.

It is found in the cytoplasm. May be involved in the energy metabolism of the mature sperm. The sequence is that of Diazepam-binding inhibitor-like 5 (Dbil5) from Mus musculus (Mouse).